A 146-amino-acid polypeptide reads, in one-letter code: 1,4-dihydroxy-2-naphthoyl-CoA hydrolase (146 aa).

The active site involves Asp15.

Belongs to the 4-hydroxybenzoyl-CoA thioesterase family. DHNA-CoA hydrolase subfamily.

It catalyses the reaction 1,4-dihydroxy-2-naphthoyl-CoA + H2O = 1,4-dihydroxy-2-naphthoate + CoA + H(+). The protein operates within cofactor biosynthesis; phylloquinone biosynthesis. Its pathway is quinol/quinone metabolism; 1,4-dihydroxy-2-naphthoate biosynthesis; 1,4-dihydroxy-2-naphthoate from chorismate: step 7/7. In terms of biological role, catalyzes the hydrolysis of 1,4-dihydroxy-2-naphthoyl-CoA (DHNA-CoA) to 1,4-dihydroxy-2-naphthoate (DHNA), a reaction involved in phylloquinone (vitamin K1) biosynthesis. This chain is 1,4-dihydroxy-2-naphthoyl-CoA hydrolase, found in Picosynechococcus sp. (strain ATCC 27264 / PCC 7002 / PR-6) (Agmenellum quadruplicatum).